A 268-amino-acid chain; its full sequence is 4-hydroxy-tetrahydrodipicolinate reductase (268 aa).

Residues 9–14, 99–101, and 123–126 each bind NAD(+); these read GAAGRM, GTT, and ASNF. Residue histidine 156 is the Proton donor/acceptor of the active site. Histidine 157 contacts (S)-2,3,4,5-tetrahydrodipicolinate. Lysine 160 (proton donor) is an active-site residue. Residue 166 to 167 participates in (S)-2,3,4,5-tetrahydrodipicolinate binding; it reads GT.

It belongs to the DapB family.

It localises to the cytoplasm. It catalyses the reaction (S)-2,3,4,5-tetrahydrodipicolinate + NAD(+) + H2O = (2S,4S)-4-hydroxy-2,3,4,5-tetrahydrodipicolinate + NADH + H(+). The catalysed reaction is (S)-2,3,4,5-tetrahydrodipicolinate + NADP(+) + H2O = (2S,4S)-4-hydroxy-2,3,4,5-tetrahydrodipicolinate + NADPH + H(+). It participates in amino-acid biosynthesis; L-lysine biosynthesis via DAP pathway; (S)-tetrahydrodipicolinate from L-aspartate: step 4/4. In terms of biological role, catalyzes the conversion of 4-hydroxy-tetrahydrodipicolinate (HTPA) to tetrahydrodipicolinate. The sequence is that of 4-hydroxy-tetrahydrodipicolinate reductase from Saccharophagus degradans (strain 2-40 / ATCC 43961 / DSM 17024).